The chain runs to 289 residues: Oxaloacetate decarboxylase (289 aa).

Ser47 contacts substrate. Asp85 lines the Mg(2+) pocket. Substrate contacts are provided by Arg156 and His232.

Belongs to the isocitrate lyase/PEP mutase superfamily. Oxaloacetate decarboxylase family. As to quaternary structure, homotetramer; dimer of dimers. The cofactor is Mg(2+).

The enzyme catalyses oxaloacetate + H(+) = pyruvate + CO2. Its function is as follows. Catalyzes the decarboxylation of oxaloacetate into pyruvate. Seems to play a role in maintaining cellular concentrations of bicarbonate and pyruvate. The protein is Oxaloacetate decarboxylase of Rhodopseudomonas palustris (strain BisB5).